The following is a 310-amino-acid chain: Ribonuclease Z (310 aa).

5 residues coordinate Zn(2+): H61, H63, D65, H66, and H139. D65 functions as the Proton acceptor in the catalytic mechanism. Positions 150–175 are disordered; that stretch reads EDDRPGRFDRPKAEELGVPVGPKFGR. Residues 153-164 show a composition bias toward basic and acidic residues; sequence RPGRFDRPKAEE. Positions 210 and 268 each coordinate Zn(2+).

The protein belongs to the RNase Z family. As to quaternary structure, homodimer. Requires Zn(2+) as cofactor.

It catalyses the reaction Endonucleolytic cleavage of RNA, removing extra 3' nucleotides from tRNA precursor, generating 3' termini of tRNAs. A 3'-hydroxy group is left at the tRNA terminus and a 5'-phosphoryl group is left at the trailer molecule.. Functionally, zinc phosphodiesterase, which displays some tRNA 3'-processing endonuclease activity. Probably involved in tRNA maturation, by removing a 3'-trailer from precursor tRNA. This chain is Ribonuclease Z, found in Halorubrum lacusprofundi (strain ATCC 49239 / DSM 5036 / JCM 8891 / ACAM 34).